A 78-amino-acid chain; its full sequence is Putative membrane protein insertion efficiency factor (78 aa).

Belongs to the UPF0161 family.

Its subcellular location is the cell inner membrane. Its function is as follows. Could be involved in insertion of integral membrane proteins into the membrane. This is Putative membrane protein insertion efficiency factor from Prochlorococcus marinus subsp. pastoris (strain CCMP1986 / NIES-2087 / MED4).